Reading from the N-terminus, the 346-residue chain is Patr class I histocompatibility antigen, CH28 alpha chain (346 aa).

A signal peptide spans 1-21; it reads MAPRSLLLLFSGALALTETWA. An alpha-1 region spans residues 22–111; the sequence is GSHSLRYFST…LLRRYNQSEA (90 aa). At 22-305 the chain is on the extracellular side; it reads GSHSLRYFST…EQSPQPTIPI (284 aa). Asn-107 carries N-linked (GlcNAc...) asparagine glycosylation. Positions 112–203 are alpha-2; it reads GSHTLQGMNG…ENGKETLQRA (92 aa). Cystine bridges form between Cys-122–Cys-185 and Cys-224–Cys-280. The tract at residues 204–295 is alpha-3; it reads DPPKAHIAHH…GLPQPLTLRW (92 aa). In terms of domain architecture, Ig-like C1-type spans 206 to 294; sequence PKAHIAHHPI…EGLPQPLTLR (89 aa). Residues 296–305 are connecting peptide; the sequence is EQSPQPTIPI. The helical transmembrane segment at 306–329 threads the bilayer; it reads VGIVAGLVVLGAVVTGAVVAAVMW. The Cytoplasmic segment spans residues 330-346; it reads RKKSSDRNRGSYSQAAV.

It belongs to the MHC class I family. In terms of assembly, heterodimer of an alpha chain and a beta chain (beta-2-microglobulin).

The protein localises to the membrane. Functionally, involved in the presentation of foreign antigens to the immune system. In Pan troglodytes (Chimpanzee), this protein is Patr class I histocompatibility antigen, CH28 alpha chain.